The primary structure comprises 241 residues: Fatty acid metabolism regulator protein (241 aa).

The HTH gntR-type domain occupies 11–79; sequence QSPAALAEEY…HGKPTKVNNI (69 aa). The segment at residues 39–58 is a DNA-binding region (H-T-H motif); that stretch reads ERDLADKIGVTRTTLREVLQ.

In terms of assembly, homodimer.

It is found in the cytoplasm. Multifunctional regulator of fatty acid metabolism. In Haemophilus influenzae (strain PittEE), this protein is Fatty acid metabolism regulator protein.